The primary structure comprises 103 residues: MNVTDVKIRRVVAEGRMKALASITLDHEFVVHDLRVIEGNSGLFVAMPSKRTQEGIFRDVAHPINALMRKKVEDSVLEAYAIREENGEASELELAALEATDPS.

It belongs to the SpoVG family.

Could be involved in septation. This chain is Putative septation protein SpoVG, found in Exiguobacterium sibiricum (strain DSM 17290 / CCUG 55495 / CIP 109462 / JCM 13490 / 255-15).